A 343-amino-acid polypeptide reads, in one-letter code: Zinc finger protein STP3 (343 aa).

Disordered regions lie at residues 31 to 56 (YNGEASSASTHPTLPNMNISNGSGSA) and 71 to 140 (SNDV…KPRK). Positions 33–45 (GEASSASTHPTLP) are enriched in polar residues. 3 stretches are compositionally biased toward low complexity: residues 46-56 (NMNISNGSGSA), 71-86 (SNDVSRSNSSSSFLPS), and 94-120 (SASASETSSSASPSRSISPILKVAGPS). Ser-71 and Ser-111 each carry phosphoserine. The C2H2-type zinc finger occupies 169-191 (HKCPICHRGFARNNDLLRHKKRH). Positions 198 to 222 (SQSGVLSNHNDGKGGSVSPNDDDTH) are disordered.

It localises to the nucleus. This is Zinc finger protein STP3 (STP3) from Saccharomyces cerevisiae (strain ATCC 204508 / S288c) (Baker's yeast).